A 244-amino-acid polypeptide reads, in one-letter code: uncharacterized protein (244 aa).

The disordered stretch occupies residues 1–127 (MSGPQGSDPR…YPGQYGPYGQ (127 aa)). The segment covering 34–43 (WQQQPTQEAT) has biased composition (polar residues). Low complexity-rich tracts occupy residues 45–75 (QAPAYTPQYQQPADPAYPQQYPQPTPGYAQP) and 88–127 (PGQYGQYQQPGQYGQPGQYGQPGQYAPPGQYPGQYGPYGQ). The helical transmembrane segment at 136-156 (VAVIGGVIAVMAVLFIGAVLI) threads the bilayer.

Its subcellular location is the membrane. This is an uncharacterized protein from Mycobacterium tuberculosis (strain CDC 1551 / Oshkosh).